The sequence spans 353 residues: Transcription termination/antitermination protein NusG (353 aa).

Positions 301–335 constitute a KOW domain; sequence VGDMVKIISGPFEDFAGVIKEIDPERQELKVNVTI.

Belongs to the NusG family.

Regulated by autoinhibition via interaction of the N-terminal and the C-terminal domains. Autoinhibition may prevent NusG from interacting prematurely with other components of the transcription complex or non-specific interactions with other cellular components. Functionally, participates in transcription elongation, termination and antitermination. The chain is Transcription termination/antitermination protein NusG from Thermotoga maritima (strain ATCC 43589 / DSM 3109 / JCM 10099 / NBRC 100826 / MSB8).